A 399-amino-acid chain; its full sequence is Probable F-box protein At4g22060 (399 aa).

An F-box domain is found at 12-48; sequence SWSKLPLDLLIMVFERLGFVDFQRTKSVCLAWLYASR.

In Arabidopsis thaliana (Mouse-ear cress), this protein is Probable F-box protein At4g22060.